The chain runs to 726 residues: Catalase-peroxidase (726 aa).

The segment at residues 91–214 (WHAAGTYRIG…LAAVQMGLIY (124 aa)) is a cross-link (tryptophyl-tyrosyl-methioninium (Trp-Tyr) (with M-240)). His-92 functions as the Proton acceptor in the catalytic mechanism. Positions 214–240 (YVNPEGPNGNPDPVAAAIDIRETFRRM) form a cross-link, tryptophyl-tyrosyl-methioninium (Tyr-Met) (with W-91). His-255 is a heme b binding site. Positions 335–362 (AHQWKPKGNAGAGTVPDPADPSKRRSPS) are disordered.

It belongs to the peroxidase family. Peroxidase/catalase subfamily. In terms of assembly, homodimer or homotetramer. Requires heme b as cofactor. Post-translationally, formation of the three residue Trp-Tyr-Met cross-link is important for the catalase, but not the peroxidase activity of the enzyme.

The enzyme catalyses H2O2 + AH2 = A + 2 H2O. It carries out the reaction 2 H2O2 = O2 + 2 H2O. Bifunctional enzyme with both catalase and broad-spectrum peroxidase activity. The chain is Catalase-peroxidase from Cupriavidus metallidurans (strain ATCC 43123 / DSM 2839 / NBRC 102507 / CH34) (Ralstonia metallidurans).